Here is a 630-residue protein sequence, read N- to C-terminus: GATA-type transcription factor SRE1 (630 aa).

2 disordered regions span residues 1–139 (MTGL…TPLW) and 162–203 (DRPT…RLTD). Composition is skewed to polar residues over residues 66 to 82 (DNTQ…QLQN), 115 to 133 (KAQS…NCGT), and 175 to 196 (YGSS…TNDG). The GATA-type 1 zinc-finger motif lies at 128–152 (CSNCGTKRTPLWRRSPTGATICNAC). The cystein-rich region (CRR) stretch occupies residues 219-237 (CPGGGSCNGTGGAEGCDGC). Residues 256–283 (HTPRTSPQVSTQGGPGSTEGDAGSSNPE) are disordered. Positions 258-267 (PRTSPQVSTQ) are enriched in polar residues. Residues 291-315 (CQNCQTTVTPLWRRDENGHPICNAC) form a GATA-type 2 zinc finger. Positions 339–609 (KRVVPAMREQ…AKAERRARLQ (271 aa)) are disordered. The span at 349 to 363 (SPPSATQSSNGSVSP) shows a compositional bias: polar residues. Low complexity-rich tracts occupy residues 436-447 (NNHNNGETTNTH) and 492-503 (SSSSASFPNNNP). Positions 504–513 (GRFNSISSLL) are enriched in polar residues. Over residues 558-568 (SHSPPRFSPSL) the composition is skewed to low complexity. Basic and acidic residues predominate over residues 595 to 609 (VDHRDAKAERRARLQ). A coiled-coil region spans residues 595–630 (VDHRDAKAERRARLQREAQDMREALKAKERELALLE).

The protein resides in the nucleus. Functionally, GATA-type transcription repressor that regulates iron- acquisition genes through specific binding the GATA sequence element 5'-(G/A)ATC(T/A)GATAA-3' of target promoters in an iron- and zinc-dependent manner. Regulation occurs via direct binding of iron ions. Iron acquisition regulation is critical for survival under both iron-limiting conditions (to acquire essential iron) and iron-replete conditions (to limit iron toxicity). SRE1 targets include genes encoding a number of key iron-regulated factors such as those involved in siderophore biosynthesis, presumed ferric reductase activity, iron-responsive transcriptional regulation, oxidative stress response, as well as genes encoding a number of putative oxidoreductases, metabolic and mitochondrial enzymes, superoxide dismutase, and genes previously identified as induced during nitrosative stress. This is GATA-type transcription factor SRE1 from Ajellomyces capsulatus (Darling's disease fungus).